Here is a 224-residue protein sequence, read N- to C-terminus: PKHD-type hydroxylase SO_3913 (224 aa).

The Fe2OG dioxygenase domain maps to 78-176; that stretch reads QFYPPLFNRY…RTSAFMWLQS (99 aa). Fe cation-binding residues include His-96, Asp-98, and His-157. Position 167 (Arg-167) interacts with 2-oxoglutarate.

Requires Fe(2+) as cofactor. It depends on L-ascorbate as a cofactor.

This is PKHD-type hydroxylase SO_3913 from Shewanella oneidensis (strain ATCC 700550 / JCM 31522 / CIP 106686 / LMG 19005 / NCIMB 14063 / MR-1).